The sequence spans 451 residues: Phosphoglucosamine mutase (451 aa).

The active-site Phosphoserine intermediate is serine 104. 4 residues coordinate Mg(2+): serine 104, aspartate 242, aspartate 244, and aspartate 246. Serine 104 carries the phosphoserine modification.

This sequence belongs to the phosphohexose mutase family. Requires Mg(2+) as cofactor. In terms of processing, activated by phosphorylation.

It catalyses the reaction alpha-D-glucosamine 1-phosphate = D-glucosamine 6-phosphate. In terms of biological role, catalyzes the conversion of glucosamine-6-phosphate to glucosamine-1-phosphate. The chain is Phosphoglucosamine mutase from Kocuria rhizophila (strain ATCC 9341 / DSM 348 / NBRC 103217 / DC2201).